The primary structure comprises 301 residues: Peptidyl-prolyl isomerase CWC27 (301 aa).

Residues 9 to 159 (TTAKCILYTT…YPAVLKDVEI (151 aa)) form the PPIase cyclophilin-type domain. Positions 251–280 (TELHDNVDEATTKETESQENIKEEPMDKRE) are disordered.

The protein belongs to the cyclophilin-type PPIase family. CWC27 subfamily. In terms of assembly, belongs to the CWC complex (or CEF1-associated complex), a spliceosome subcomplex composed of the U2, U5 and U6 snRNAs and at least BUD13, BUD31, BRR2, CDC40, CEF1, CLF1, CUS1, CWC2, CWC15, CWC21, CWC22, CWC23, CWC24, CWC25, CWC27, ECM2, HSH155, IST3, ISY1, LEA1, MSL1, NTC20, PRP8, PRP9, PRP11, PRP19, PRP21, PRP22, PRP45, PRP46, SLU7, SMB1, SMD1, SMD2, SMD3, SMX2, SMX3, SNT309, SNU114, SPP2, SYF1, SYF2, RSE1 and YJU2.

The protein localises to the cytoplasm. Its subcellular location is the nucleus. The enzyme catalyses [protein]-peptidylproline (omega=180) = [protein]-peptidylproline (omega=0). In terms of biological role, PPIases accelerate the folding of proteins. Catalyzes the cis-trans isomerization of proline imidic peptide bonds in oligopeptides. Involved in pre-mRNA splicing. The chain is Peptidyl-prolyl isomerase CWC27 (CWC27) from Saccharomyces cerevisiae (strain ATCC 204508 / S288c) (Baker's yeast).